The primary structure comprises 200 residues: Transcriptional repressor NrdR (200 aa).

A zinc finger lies at 3–34 (CPFCQNPDTKVIDTRISDDGHSIRRRRECPNC). Residues 46-136 (LLVKKRSGNV…VYQNFEDLED (91 aa)) enclose the ATP-cone domain.

This sequence belongs to the NrdR family. The cofactor is Zn(2+).

In terms of biological role, negatively regulates transcription of bacterial ribonucleotide reductase nrd genes and operons by binding to NrdR-boxes. The polypeptide is Transcriptional repressor NrdR (Bifidobacterium animalis subsp. lactis (strain AD011)).